A 347-amino-acid polypeptide reads, in one-letter code: Epimerase family protein SDR39U1 homolog, chloroplastic (347 aa).

A chloroplast-targeting transit peptide spans 1 to 37 (MELLCSPTSLSSSFALSSALLVPRSFSMPGTRRFMVL). NADP(+)-binding positions include 54–57 (TGFI), 76–77 (TR), 115–119 (LAGLP), and arginine 136.

In terms of assembly, can form homodimers. Expressed in leaves, stems and flower buds.

It localises to the plastid. Its subcellular location is the chloroplast inner membrane. The protein localises to the chloroplast. Its function is as follows. Putative NADP-dependent oxidoreductase that acts as a positive regulator of chloroplast division. May play a role at an early stage of the division process. This chain is Epimerase family protein SDR39U1 homolog, chloroplastic, found in Arabidopsis thaliana (Mouse-ear cress).